A 295-amino-acid chain; its full sequence is 4-hydroxy-tetrahydrodipicolinate synthase (295 aa).

Position 47 (T47) interacts with pyruvate. The active-site Proton donor/acceptor is the Y135. The active-site Schiff-base intermediate with substrate is the K163. Residue I206 participates in pyruvate binding.

As to quaternary structure, homodimer. In fact, exists in a monomer-dimer equilibrium in solution, shifted in favor of the dimer in presence of the substrate pyruvate; the monomer has significantly reduced activity compared with the dimer.

It is found in the cytoplasm. The enzyme catalyses L-aspartate 4-semialdehyde + pyruvate = (2S,4S)-4-hydroxy-2,3,4,5-tetrahydrodipicolinate + H2O + H(+). It participates in amino-acid biosynthesis; L-lysine biosynthesis via DAP pathway; (S)-tetrahydrodipicolinate from L-aspartate: step 3/4. Is insensitive to lysine-feedback inhibition. Shows ASA substrate inhibition. Its function is as follows. Catalyzes the condensation of (S)-aspartate-beta-semialdehyde [(S)-ASA] and pyruvate to 4-hydroxy-tetrahydrodipicolinate (HTPA). This is 4-hydroxy-tetrahydrodipicolinate synthase from Staphylococcus aureus (strain MRSA252).